Reading from the N-terminus, the 365-residue chain is Protein dbl-1 (365 aa).

The first 42 residues, 1 to 42 (MNDSVRTTTTISSTKSLVHSFQLSAILHLFLLISFTPMSAAA), serve as a signal peptide directing secretion. Positions 43–244 (DQHASHATRR…KRSAQTGNSE (202 aa)) are excised as a propeptide. Residues Asn110, Asn143, and Asn167 are each glycosylated (N-linked (GlcNAc...) asparagine). The tract at residues 231-259 (SVRRKRSAQTGNSERKNRKKGRKHHNTEA) is disordered. Residues 246–255 (KNRKKGRKHH) show a composition bias toward basic residues. Intrachain disulfides connect Cys264-Cys330, Cys293-Cys362, and Cys297-Cys364. N-linked (GlcNAc...) asparagine glycosylation is present at Asn306.

This sequence belongs to the TGF-beta family. As to quaternary structure, homodimer; disulfide-linked. Interacts with drag-1. As to expression, expressed in embryos just prior to hatching and remains constant in most cells throughout the larval and adult stages. Expressed by AVA command interneurons.

It localises to the secreted. Ligand for the serine/threonine-protein kinase receptor type-1 sma-6 which activates a TGF-beta-like signaling pathway. Multifunctional protein that is involved in body size, male ectodermal patterning, innate immunity, lipid metabolism and neural plasticity. Dose-dependent regulator of body size, probably influencing the sizes of some or all cells rather than their number. Plays a role in patterning of male-specific genital sensilla (simple sense organs), known as rays, and mating-associated structures, spicules. Plays a protective role in response to infection by the Gram-negative bacterium S.marcescens, by activating expression of genes involved in innate immunity. Regulator of lipid homeostasis, acting non cell-autonomously in the hypodermis; partly dependent on the Insulin/IGF-1-like signaling (IIS) mediated pathway. Required for aversive olfactory learning of pathogenic bacteria in adults. Involved in gland cell morphology, possibly via activation of a Smad-independent TGF-beta signaling pathway. Required to oppose the autoregulation of expression of Runt-related transcription factor rnt-1. In Caenorhabditis elegans, this protein is Protein dbl-1.